The primary structure comprises 410 residues: Phosphoglycerate kinase (410 aa).

Residues 24–26 (DLN), Arg40, 63–66 (HLGR), Arg122, and Arg162 each bind substrate. Residues Lys212, Gly300, Glu331, and 360-363 (GGDS) contribute to the ATP site.

This sequence belongs to the phosphoglycerate kinase family. In terms of assembly, monomer.

It is found in the cytoplasm. It catalyses the reaction (2R)-3-phosphoglycerate + ATP = (2R)-3-phospho-glyceroyl phosphate + ADP. The protein operates within carbohydrate degradation; glycolysis; pyruvate from D-glyceraldehyde 3-phosphate: step 2/5. This Nocardia farcinica (strain IFM 10152) protein is Phosphoglycerate kinase.